Reading from the N-terminus, the 515-residue chain is Germ cell-less protein-like 1 (515 aa).

The disordered stretch occupies residues 1 to 35; sequence MGSLSSRVLRQPRPALAQQAQGARAGGSARRPDTG. A compositionally biased stretch (low complexity) spans 11 to 29; that stretch reads QPRPALAQQAQGARAGGSA. The Nuclear localization signal signature appears at 49–55; it reads SHKRKRS. Residues 65-85 form a disordered region; it reads DSETDEDEEEGDEQQRLLNTP. Serine 66 carries the phosphoserine modification. Acidic residues predominate over residues 67 to 76; that stretch reads ETDEDEEEGD. Threonine 68 carries the post-translational modification Phosphothreonine. A Nuclear localization signal motif is present at residues 85 to 91; that stretch reads PRRKKLK. Positions 108–178 constitute a BTB domain; that stretch reads SDIKICALGE…LYRDDVLIKP (71 aa).

In terms of assembly, interacts with TMPO-beta, TSG101 and TFDP2. Interacts with EMD.

The protein localises to the nucleus matrix. Possible function in spermatogenesis. Enhances the degradation of MDM2 and increases the amount of p53 probably by modulating the nucleocytoplasmic transport. The sequence is that of Germ cell-less protein-like 1 (GMCL1) from Homo sapiens (Human).